The chain runs to 116 residues: Iron-sulfur cluster insertion protein ErpA (116 aa).

Iron-sulfur cluster is bound by residues Cys-44, Cys-108, and Cys-110.

The protein belongs to the HesB/IscA family. Homodimer. Requires iron-sulfur cluster as cofactor.

Functionally, required for insertion of 4Fe-4S clusters for at least IspG. This chain is Iron-sulfur cluster insertion protein ErpA, found in Shewanella loihica (strain ATCC BAA-1088 / PV-4).